The chain runs to 131 residues: Neurophysin 2 (131 aa).

7 cysteine pairs are disulfide-bonded: Cys-10-Cys-55, Cys-13-Cys-27, Cys-21-Cys-45, Cys-28-Cys-35, Cys-62-Cys-74, Cys-68-Cys-86, and Cys-75-Cys-80.

This sequence belongs to the vasopressin/oxytocin family.

The protein localises to the secreted. In terms of biological role, neurophysin 2 specifically binds vasopressin. In Anser anser anser (Western greylag goose), this protein is Neurophysin 2.